Consider the following 760-residue polypeptide: MVIKKGFFALSSCTLGLGLILTACGARGKFDQVDDGVIKLATSIQNKDSIAALNTIYKKYKERHPGSYPVQNFQVPGGYSGLRNDIRTRLSAKDGNNFYNIVLNYPDVVSSLATSDMQLILDNVDTKLLSKNFLSFNERIGGVRQKGIYAIPISLSTELMVLNGPVLHYILNSAKKKENGAQMIKRSGSFSTVQKGTMAIDMNDQKTKDLWQKIENAAKANGKTTSTQTSPQPKNAVSSLQLKQAAEGTSTDNSQDAENSDNEIKKTWGEYKEEGNHTLKGYTFKASVFENWNELLDFSTRVANSFPDKIKNQASKKATELQGVFGVDSVSGALFSATFAAGGGDYDKFFFNVKNGRGNFRNLLEKGSSYNNLQKVFNDYKQLISSNGLYINKGGAYSSNFLKFHQLAFSVGSSSGYHFAFAGESAKRLEFGQKAIEYPRDTYEIKAPTNSQNGNGTLLGSFTKSKSNGKEQSGQDEDNQTSETIELYKSSVPSGKEAGKNALAITNQQLISALENAAKDNKTSQPQARSLTASDQVQITQSSDKVIGYITTSNLDIDNNNTFDVGKLNGDKSTSKIIVNATLKTLNKINTLQSEEGIILPHPQKYKSTDPQAVATVQGPSIIGVHANAKENAETQKFINWFINQKETWPENSKGNKNGQNGQMTAAQYFAKSSGYVLPYSETFTKQSEDEHSTTKDAYKILKDVNDGKLVGYSDPSDFRSGKFRDTIVAAFSGAVSSKADFNKFFKGFEQQLGQEYRRG.

A signal peptide spans 1 to 23 (MVIKKGFFALSSCTLGLGLILTA). A lipid anchor (N-palmitoyl cysteine) is attached at Cys24. Cys24 carries the S-diacylglycerol cysteine lipid modification. Disordered regions lie at residues 220–262 (ANGK…NSDN) and 443–482 (YEIKAPTNSQNGNGTLLGSFTKSKSNGKEQSGQDEDNQTS). Polar residues-rich tracts occupy residues 222 to 257 (GKTTSTQTSPQPKNAVSSLQLKQAAEGTSTDNSQDA) and 448 to 472 (PTNSQNGNGTLLGSFTKSKSNGKEQ).

The protein belongs to the MG185/MG260 family.

It is found in the cell membrane. This is an uncharacterized protein from Mycoplasma pneumoniae (strain ATCC 29342 / M129 / Subtype 1) (Mycoplasmoides pneumoniae).